Reading from the N-terminus, the 300-residue chain is Zinc finger protein RME1 (300 aa).

The span at 80–90 shows a compositional bias: polar residues; the sequence is QAYDSTSSTEE. The disordered stretch occupies residues 80–100; the sequence is QAYDSTSSTEEGTAPQLRPDE. C2H2-type zinc fingers lie at residues 178-199, 206-234, and 256-281; these read YHCS…HLDE, CKCP…ASQH, and LNCP…AMVH.

The protein resides in the nucleus. Its function is as follows. Involved in the control of meiosis. Represses the transcription of the IME1 gene thereby inhibiting cells from entering meiosis. But also activates the CLN2 gene thus promoting mitosis. This is Zinc finger protein RME1 (RME1) from Saccharomyces cerevisiae (strain ATCC 204508 / S288c) (Baker's yeast).